A 238-amino-acid chain; its full sequence is tRNA1(Val) (adenine(37)-N6)-methyltransferase (238 aa).

It belongs to the methyltransferase superfamily. tRNA (adenine-N(6)-)-methyltransferase family.

It is found in the cytoplasm. The catalysed reaction is adenosine(37) in tRNA1(Val) + S-adenosyl-L-methionine = N(6)-methyladenosine(37) in tRNA1(Val) + S-adenosyl-L-homocysteine + H(+). Its function is as follows. Specifically methylates the adenine in position 37 of tRNA(1)(Val) (anticodon cmo5UAC). The protein is tRNA1(Val) (adenine(37)-N6)-methyltransferase of Shewanella baltica (strain OS195).